The primary structure comprises 536 residues: MAKDPGRVLIFDTTLRDGEQSPGASLNLEEKLAIAQQLARLGVDIIEAGFPYASQGDFKAVQRIADQVGGEEGPIICGLARASKADIKACAEAIAPAPRKRIHTFIATSDIHLKHKLRKSRADVLKIVPEMVGYARSLASDVEFSCEDAARSDPDFMYEVIESAIAAGAGTINIPDTVGYITPAEFGDLIIGINKNVSNIDESILSVHGHNDLGLAVANFLEAVKNGARQLECTINGIGERAGNAALEELVMALHVRRRYFNPFFGKDSESPTPLTAIRTEEITKTSRLVSNLTGMVVQPNKAIVGANAFAHESGIHQDGVLKNPLTYEIVDAKTVGLAENRISLGKLSGRSAVRARLEELGYDLTREDLNDAFARFKDLADRKREISDRDLEAIVSEQVMQPEARFKLHLVQVSCGTALRPTATVTIADQDGIENTAVALGTGPVDAVCKALRSLTNEKNDLIEFSVKSVTEGIDALGEVTIRLRRDGKIFSGHSADTDVVVAAAQAYINALNRLVYSLKKSSLHPQHDVVKANL.

One can recognise a Pyruvate carboxyltransferase domain in the interval 8–273 (VLIFDTTLRD…FFGKDSESPT (266 aa)). D17, H208, H210, and N244 together coordinate Mn(2+). Residues 408-536 (KLHLVQVSCG…PQHDVVKANL (129 aa)) are regulatory domain.

It belongs to the alpha-IPM synthase/homocitrate synthase family. LeuA type 1 subfamily. In terms of assembly, homodimer. Mn(2+) serves as cofactor.

The protein localises to the cytoplasm. The catalysed reaction is 3-methyl-2-oxobutanoate + acetyl-CoA + H2O = (2S)-2-isopropylmalate + CoA + H(+). The protein operates within amino-acid biosynthesis; L-leucine biosynthesis; L-leucine from 3-methyl-2-oxobutanoate: step 1/4. Its function is as follows. Catalyzes the condensation of the acetyl group of acetyl-CoA with 3-methyl-2-oxobutanoate (2-ketoisovalerate) to form 3-carboxy-3-hydroxy-4-methylpentanoate (2-isopropylmalate). The sequence is that of 2-isopropylmalate synthase from Prochlorococcus marinus (strain SARG / CCMP1375 / SS120).